Consider the following 656-residue polypeptide: Pyoverdine export ATP-binding/permease protein PvdT (656 aa).

The region spanning 6–245 (IDLRGIRKSY…SANPAALQAV (240 aa)) is the ABC transporter domain. An ATP-binding site is contributed by 43–50 (GASGSGKS). Helical transmembrane passes span 284–304 (ALTL…LAVG), 538–558 (IAAI…LMTV), 589–609 (LSVV…AALL), and 619–639 (LSAV…FGFM).

It belongs to the ABC transporter superfamily. Macrolide exporter (TC 3.A.1.122) family. As to quaternary structure, part of the tripartite efflux system PvdRT-OpmQ, which is composed of an inner membrane component with both ATPase and permease domains, PvdT, a periplasmic membrane fusion protein, PvdR, and an outer membrane component, OpmQ.

It localises to the cell inner membrane. Part of the tripartite efflux system PvdRT-OpmQ required for the secretion into the extracellular milieu of the siderophore pyoverdine (PVD), which is involved in iron acquisition. This subunit binds PVD and drives its secretion by hydrolyzing ATP. The system is responsible for export of newly synthesized PVD after the final steps of biosynthesis have taken place in the periplasm. It is also responsible for recycling of PVD after internalization of ferri-PVD into the periplasm by the outer-membrane receptor FpvA and release of iron from PVD, thus making PVD available for new cycles of iron uptake. The sequence is that of Pyoverdine export ATP-binding/permease protein PvdT from Pseudomonas syringae pv. tomato (strain ATCC BAA-871 / DC3000).